The following is a 177-amino-acid chain: Large ribosomal subunit protein uL10 (177 aa).

It belongs to the universal ribosomal protein uL10 family. Part of the ribosomal stalk of the 50S ribosomal subunit. The N-terminus interacts with L11 and the large rRNA to form the base of the stalk. The C-terminus forms an elongated spine to which L12 dimers bind in a sequential fashion forming a multimeric L10(L12)X complex.

Forms part of the ribosomal stalk, playing a central role in the interaction of the ribosome with GTP-bound translation factors. In Caldanaerobacter subterraneus subsp. tengcongensis (strain DSM 15242 / JCM 11007 / NBRC 100824 / MB4) (Thermoanaerobacter tengcongensis), this protein is Large ribosomal subunit protein uL10.